The sequence spans 257 residues: tRNA pseudouridine synthase A (257 aa).

Residue Asp-53 is the Nucleophile of the active site. Tyr-111 is a binding site for substrate.

Belongs to the tRNA pseudouridine synthase TruA family. As to quaternary structure, homodimer.

The catalysed reaction is uridine(38/39/40) in tRNA = pseudouridine(38/39/40) in tRNA. Formation of pseudouridine at positions 38, 39 and 40 in the anticodon stem and loop of transfer RNAs. The chain is tRNA pseudouridine synthase A from Xylella fastidiosa (strain M23).